A 352-amino-acid chain; its full sequence is tRNA-specific 2-thiouridylase MnmA (352 aa).

Residues 6–13 and Leu32 each bind ATP; that span reads AMSGGVDS. The active-site Nucleophile is Cys101. Cys101 and Cys194 are disulfide-bonded. Gly125 serves as a coordination point for ATP. The interaction with tRNA stretch occupies residues 144–146; the sequence is KDQ. Cys194 acts as the Cysteine persulfide intermediate in catalysis.

Belongs to the MnmA/TRMU family.

It localises to the cytoplasm. The enzyme catalyses S-sulfanyl-L-cysteinyl-[protein] + uridine(34) in tRNA + AH2 + ATP = 2-thiouridine(34) in tRNA + L-cysteinyl-[protein] + A + AMP + diphosphate + H(+). In terms of biological role, catalyzes the 2-thiolation of uridine at the wobble position (U34) of tRNA, leading to the formation of s(2)U34. This Frankia casuarinae (strain DSM 45818 / CECT 9043 / HFP020203 / CcI3) protein is tRNA-specific 2-thiouridylase MnmA.